Reading from the N-terminus, the 297-residue chain is Homoserine kinase (297 aa).

82-92 (PVSRGLGSSAA) contributes to the ATP binding site.

The protein belongs to the GHMP kinase family. Homoserine kinase subfamily.

The protein localises to the cytoplasm. The enzyme catalyses L-homoserine + ATP = O-phospho-L-homoserine + ADP + H(+). The protein operates within amino-acid biosynthesis; L-threonine biosynthesis; L-threonine from L-aspartate: step 4/5. Its function is as follows. Catalyzes the ATP-dependent phosphorylation of L-homoserine to L-homoserine phosphate. The protein is Homoserine kinase of Clostridium botulinum (strain ATCC 19397 / Type A).